The primary structure comprises 234 residues: MRLLNNLILMVVLFVAVSNATTKFTFNTFSVRNTEDQTCFTKTAKTTDDSTKVDINKCTVGCGGSMKIRKGTKSQQYQFELFSSTDCTGETTSKVLFVCPNPSIDAISIKSTSNTIKCGTLPPDSEIKEDDTATAVVNDENNNETKNEPKTKTKSTPKSPSTPKTNNSNEDSDLTTSSSDSSSSTKSSPKSKSSTEVNENKPKSDNETAEGNNASSNIATFSLVIISLLVASLF.

An N-terminal signal peptide occupies residues Met1–Ala20. Residues Asn19, Asn143, Asn166, and Asn206 are each glycosylated (N-linked (GlcNAc...) asparagine). The disordered stretch occupies residues Thr115–Asn213. Residues Lys154 to Thr195 show a composition bias toward low complexity. Residue Asn212 is the site of GPI-like-anchor amidated asparagine attachment. Residue Asn213 is glycosylated (N-linked (GlcNAc...) asparagine). Residues Asn213–Phe234 constitute a propeptide, removed in mature form.

The protein belongs to the ponticulin family. Post-translationally, the GPI-like-anchor contains a phosphoceramide group, rather than a phosphatidyl group.

It is found in the cell membrane. Binds F-actin and nucleates actin assembly. The chain is Ponticulin-like protein J (ponJ) from Dictyostelium discoideum (Social amoeba).